We begin with the raw amino-acid sequence, 509 residues long: Coiled-coil domain-containing protein 181 (509 aa).

The span at 46–82 (ENINQDLKENETVMEHTKRHSDPDKSLQDEVSPRRND) shows a compositional bias: basic and acidic residues. Disordered stretches follow at residues 46–120 (ENIN…EEED) and 241–367 (PINN…EEKE). Polar residues-rich tracts occupy residues 243-266 (NNAN…SVSG) and 300-334 (TCPS…STYC). Residues 335–375 (LSPRQKELQKQLEEKREKLKREEERRKIEEEKEKKRENDIV) adopt a coiled-coil conformation. The segment covering 338–367 (RQKELQKQLEEKREKLKREEERRKIEEEKE) has biased composition (basic and acidic residues).

Belongs to the CCDC181 family. As to quaternary structure, homodimer. Interacts with HOOK1. Interacts with HOOK2. Interacts with HOOK3.

It localises to the cytoplasm. It is found in the cytoskeleton. Its subcellular location is the cell projection. The protein resides in the cilium. The protein localises to the flagellum. Microtubule-binding protein that localizes to the microtubular manchette of elongating spermatids. This is Coiled-coil domain-containing protein 181 from Homo sapiens (Human).